Consider the following 320-residue polypeptide: Probable arabinan endo-1,5-alpha-L-arabinosidase C (320 aa).

The N-terminal stretch at 1–16 (MYRSTLLFLFIALVNA) is a signal peptide. The active-site Proton acceptor is D31. N-linked (GlcNAc...) asparagine glycosylation is found at N73, N137, and N191. E199 acts as the Proton donor in catalysis.

This sequence belongs to the glycosyl hydrolase 43 family.

Its subcellular location is the secreted. The catalysed reaction is Endohydrolysis of (1-&gt;5)-alpha-arabinofuranosidic linkages in (1-&gt;5)-arabinans.. It participates in glycan metabolism; L-arabinan degradation. In terms of biological role, endo-1,5-alpha-L-arabinanase involved in degradation of pectin. Its preferred substrate is linear 1,5-alpha-L-arabinan. The protein is Probable arabinan endo-1,5-alpha-L-arabinosidase C (abnC) of Aspergillus terreus (strain NIH 2624 / FGSC A1156).